Consider the following 541-residue polypeptide: Chaperonin GroEL (541 aa).

Residues 29 to 32 (TIGP), 86 to 90 (DGTTT), Gly-413, and Asp-494 contribute to the ATP site.

Belongs to the chaperonin (HSP60) family. In terms of assembly, forms a cylinder of 14 subunits composed of two heptameric rings stacked back-to-back. Interacts with the co-chaperonin GroES.

The protein localises to the cytoplasm. It carries out the reaction ATP + H2O + a folded polypeptide = ADP + phosphate + an unfolded polypeptide.. Its function is as follows. Together with its co-chaperonin GroES, plays an essential role in assisting protein folding. The GroEL-GroES system forms a nano-cage that allows encapsulation of the non-native substrate proteins and provides a physical environment optimized to promote and accelerate protein folding. The sequence is that of Chaperonin GroEL from Lachnospira eligens (strain ATCC 27750 / DSM 3376 / VPI C15-48 / C15-B4) (Eubacterium eligens).